We begin with the raw amino-acid sequence, 476 residues long: Protein transport protein Sec61 subunit alpha-like 2 (476 aa).

Topologically, residues 2 to 33 (AIKFLEVIKPFCAVLPEIQKPERRIQFKEKVL) are cytoplasmic. A helical transmembrane segment spans residues 34–53 (WTAITLFIFLVCCQIPLFGI). The Lumenal portion of the chain corresponds to 54-76 (MSSDSADPFYWMRVIMASNRGTL). The chain crosses the membrane as a helical span at residues 77–96 (MELGISPIVTSGLIMQLLAG). The Cytoplasmic portion of the chain corresponds to 97–117 (AKIIEVGDTPKDRALFNGAQK). Residues 118-138 (LFGMIITIGQAVVYVMTGMYG) form a helical membrane-spanning segment. Residues 139–144 (DPSEMG) are Lumenal-facing. A helical membrane pass occupies residues 145–165 (AGICLLIIIQLFVAGLIVLLL). Over 166–172 (DELLQKG) the chain is Cytoplasmic. The helical transmembrane segment at 173–193 (YGLGSGISLFIATNICETIVW) threads the bilayer. Residues 194–240 (KAFSPTTVNTGRGTEFEGAIIALFHLLATRTDKVRALREAFYRQNLP) are Lumenal-facing. The helical transmembrane segment at 241 to 261 (NLMNLIATIFVFAVVIYFQGF) threads the bilayer. Over 262-288 (RVDLPIKSARYRGQYNTYPIKLFYTSN) the chain is Cytoplasmic. The helical transmembrane segment at 289–309 (IPIILQSALVSNLYVISQMLS) threads the bilayer. At 310–354 (TRFSGNFLVNLLGTWSDTSTGGPARAYPVGGLCYYLSPPESFGTV) the chain is on the lumenal side. A helical transmembrane segment spans residues 355-375 (LEDPIHAIIYIIFMLGSCAFF). At 376 to 420 (SKTWIEVSGSSAKDVAKQLKEQQMVMRGHRETSMVHELNRYIPTA) the chain is on the cytoplasmic side. The helical transmembrane segment at 421 to 441 (AAFGGLCIGGLSVMADFLGAI) threads the bilayer. Over 442 to 445 (GSGT) the chain is Lumenal. Residues 446–462 (GILLAVTIIYQYFEIFV) traverse the membrane as a helical segment. Over 463–476 (KEQSEVGSVGALLF) the chain is Cytoplasmic.

It belongs to the SecY/SEC61-alpha family. As to quaternary structure, the SEC61 channel-forming translocon complex consists of channel-forming core components SEC61A1, SEC61B and SEC61G and different auxiliary components such as SEC62 and SEC63.

Its subcellular location is the endoplasmic reticulum membrane. Component of SEC61 channel-forming translocon complex that mediates transport of signal peptide-containing precursor polypeptides across the endoplasmic reticulum (ER). Forms a ribosome receptor and a gated pore in the ER membrane, both functions required for cotranslational translocation of nascent polypeptides. This is Protein transport protein Sec61 subunit alpha-like 2 (sec61al2) from Danio rerio (Zebrafish).